Consider the following 279-residue polypeptide: Thymidylate synthase (279 aa).

Residue arginine 29 participates in dUMP binding. Histidine 59 serves as a coordination point for (6R)-5,10-methylene-5,6,7,8-tetrahydrofolate. 134 to 135 (RR) provides a ligand contact to dUMP. The active-site Nucleophile is cysteine 154. DUMP contacts are provided by residues 181 to 184 (RSAD), asparagine 192, and 222 to 224 (HIY). Aspartate 184 lines the (6R)-5,10-methylene-5,6,7,8-tetrahydrofolate pocket. Alanine 278 lines the (6R)-5,10-methylene-5,6,7,8-tetrahydrofolate pocket.

The protein belongs to the thymidylate synthase family. Bacterial-type ThyA subfamily. Homodimer.

It localises to the cytoplasm. It carries out the reaction dUMP + (6R)-5,10-methylene-5,6,7,8-tetrahydrofolate = 7,8-dihydrofolate + dTMP. It participates in pyrimidine metabolism; dTTP biosynthesis. Functionally, catalyzes the reductive methylation of 2'-deoxyuridine-5'-monophosphate (dUMP) to 2'-deoxythymidine-5'-monophosphate (dTMP) while utilizing 5,10-methylenetetrahydrofolate (mTHF) as the methyl donor and reductant in the reaction, yielding dihydrofolate (DHF) as a by-product. This enzymatic reaction provides an intracellular de novo source of dTMP, an essential precursor for DNA biosynthesis. The polypeptide is Thymidylate synthase (Paracidovorax citrulli (strain AAC00-1) (Acidovorax citrulli)).